We begin with the raw amino-acid sequence, 363 residues long: HAUS augmin-like complex subunit 4 (363 aa).

It belongs to the HAUS4 family. Component of the HAUS augmin-like complex. The complex interacts with the gamma-tubulin ring complex and this interaction is required for spindle assembly. Interacts with EML3 (phosphorylated at 'Thr-881').

It localises to the cytoplasm. The protein resides in the cytoskeleton. The protein localises to the microtubule organizing center. It is found in the centrosome. Its subcellular location is the spindle. In terms of biological role, contributes to mitotic spindle assembly, maintenance of centrosome integrity and completion of cytokinesis as part of the HAUS augmin-like complex. This is HAUS augmin-like complex subunit 4 (HAUS4) from Homo sapiens (Human).